The following is a 675-amino-acid chain: MADKEAGGGDAGPRETAPTSTYSSPARSLGDTGITPLSPSHILNDADPVSEQQTFLVVVAIDFGTTSSGYAYSFTKEPECIHVMRRWEGGDPGVSNQKTPTTILLTPERKFHSFGYAARDFYHDLDPSEAKQWLYLEKFKMKLHTTGDLTMDTDLTAANGKKVKALEIFAYALQYFKEQALKELSDQAGSDFENSDVRWVITVPAIWKQPAKQFMREAAYQAGLASPENSEQLIIALEPEAASIYCRKLRLHQMIELSSKAVVNGYSASDTVGAGFAQAKEHVRRNRQSRTFLVENVIGEIWSELEEGDKYVVVDSGGGTVDLTVHQIRLPEGHLKELYKATGGPYGSLGVDYEFEKLLCKIFGEDFIEQFKIKRPAAWVDLMIAFESRKRAAAPDRTNPLNITLPFSFIDYYKKFRGHSVEHALRKSNVDFVKWSSQGMLRMSPDAMNALFKPTIDSIIEHLRDLFQKPEVSTVKFLFLVGGFAEAPLLQQAVQTAFGDKCRIIIPQDVGLTILKGAVLFGLDPAVIKVRRSPLTYGVGVLNRYVEGKHPPEKLLVKDGTRWCTDVFDKFISADQSVALGELVKRSYTPAKPSQLVIIINIYSSEHDNVSFITDPGVKKCGTLRLDLTGSGGTAVPARREIQTIMQFGDTEIKATAVDITTSKSVKVGIDFLNY.

A disordered region spans residues 1–45; it reads MADKEAGGGDAGPRETAPTSTYSSPARSLGDTGITPLSPSHILND. Position 2 is an N-acetylalanine (alanine 2). Residues 17-26 are compositionally biased toward polar residues; that stretch reads APTSTYSSPA.

The protein belongs to the heat shock protein 70 family. As to quaternary structure, interacts with SORL1 (via cytosolic C-terminus); this interaction affects SORL1 internalization and subcellular localization. In terms of tissue distribution, expressed most strongly in brain, kidney and heart with little or no expression in other tissues. In the brain, expressed in glial cells, including astrocytes (at protein level). In the aorta, preferentially expressed in lesions.

Its subcellular location is the cytoplasm. It is found in the nucleus. Functionally, adapter protein for SORL1, but not SORT1. Delays SORL1 internalization and affects SORL1 subcellular localization. The polypeptide is Heat shock 70 kDa protein 12A (Hspa12a) (Mus musculus (Mouse)).